The chain runs to 188 residues: Killer cell lectin-like receptor subfamily G member 1 (188 aa).

At 1–33 the chain is on the cytoplasmic side; it reads MADSSIYSTLELPEAPQVQDESRWKLKAVLHRP. Positions 5–10 match the ITIM motif motif; the sequence is SIYSTL. A helical; Signal-anchor for type II membrane protein membrane pass occupies residues 34–56; it reads HLSRFAMVALGLLTVILMSLLMY. Residues 57 to 188 are Extracellular-facing; sequence QRILCCGSKD…LQWICKKVLY (132 aa). The cysteines at positions 75 and 86 are disulfide-linked. N-linked (GlcNAc...) asparagine glycans are attached at residues N82 and N97. Residues 82 to 184 form the C-type lectin domain; the sequence is NGSHCYYFSM…CEVALQWICK (103 aa). 2 disulfide bridges follow: C103-C183 and C162-C175.

Forms a monomer and homodimer; disulfide-linked. Interacts (via ITIM motif) with PTPN11 and INPP5D. Post-translationally, phosphorylated in response to monoclonal antibody G63 binding and antigenic stimulation. In terms of tissue distribution, expressed specifically on natural killer (NK) cells and activated CD8 T-cells. Not detected in spleen, thymus, lymph node, testis, brain or kidney. Not detected on mast cell lines, bone marrow-derived mast cells, or peritoneal mast cells.

It is found in the cell membrane. In terms of biological role, plays an inhibitory role on natural killer (NK) cells and T-cell functions upon binding to their non-MHC ligands. May mediate missing self recognition by binding to a highly conserved site on classical cadherins, enabling it to monitor expression of E-cadherin/CDH1, N-cadherin/CDH2 and R-cadherin/CDH4 on target cells. The polypeptide is Killer cell lectin-like receptor subfamily G member 1 (Klrg1) (Mus musculus (Mouse)).